A 125-amino-acid chain; its full sequence is Small ribosomal subunit protein uS12m (125 aa).

The tract at residues 1 to 26 (MPTINQLLRKKSSRQAPKLKSKKPAL) is disordered. Residues 8 to 23 (LRKKSSRQAPKLKSKK) show a composition bias toward basic residues.

Belongs to the universal ribosomal protein uS12 family.

Its subcellular location is the mitochondrion. In Prototheca wickerhamii, this protein is Small ribosomal subunit protein uS12m (RPS12).